A 564-amino-acid chain; its full sequence is CTP synthase (564 aa).

The amidoligase domain stretch occupies residues 1–265 (MTKFVFVTGG…DEIVCHRLDI (265 aa)). A CTP-binding site is contributed by Ser-13. Residue Ser-13 participates in UTP binding. ATP contacts are provided by residues 14–19 (SLGKGI) and Asp-71. Residues Asp-71 and Glu-139 each contribute to the Mg(2+) site. CTP-binding positions include 146–148 (DIE), 186–191 (KTKPTQ), and Lys-222. Residues 186 to 191 (KTKPTQ) and Lys-222 contribute to the UTP site. The Glutamine amidotransferase type-1 domain maps to 290-543 (SIALVGKYVD…IQAAISFAGQ (254 aa)). Gly-351 provides a ligand contact to L-glutamine. The active-site Nucleophile; for glutamine hydrolysis is Cys-378. Residues 379–382 (LGMQ), Glu-402, and Arg-469 contribute to the L-glutamine site. Residues His-516 and Glu-518 contribute to the active site.

The protein belongs to the CTP synthase family. Homotetramer.

It catalyses the reaction UTP + L-glutamine + ATP + H2O = CTP + L-glutamate + ADP + phosphate + 2 H(+). The catalysed reaction is L-glutamine + H2O = L-glutamate + NH4(+). It carries out the reaction UTP + NH4(+) + ATP = CTP + ADP + phosphate + 2 H(+). It functions in the pathway pyrimidine metabolism; CTP biosynthesis via de novo pathway; CTP from UDP: step 2/2. With respect to regulation, allosterically activated by GTP, when glutamine is the substrate; GTP has no effect on the reaction when ammonia is the substrate. The allosteric effector GTP functions by stabilizing the protein conformation that binds the tetrahedral intermediate(s) formed during glutamine hydrolysis. Inhibited by the product CTP, via allosteric rather than competitive inhibition. Functionally, catalyzes the ATP-dependent amination of UTP to CTP with either L-glutamine or ammonia as the source of nitrogen. Regulates intracellular CTP levels through interactions with the four ribonucleotide triphosphates. This chain is CTP synthase, found in Nitrosomonas europaea (strain ATCC 19718 / CIP 103999 / KCTC 2705 / NBRC 14298).